A 117-amino-acid chain; its full sequence is Large ribosomal subunit protein uL18 (117 aa).

This sequence belongs to the universal ribosomal protein uL18 family. As to quaternary structure, part of the 50S ribosomal subunit; part of the 5S rRNA/L5/L18/L25 subcomplex. Contacts the 5S and 23S rRNAs.

In terms of biological role, this is one of the proteins that bind and probably mediate the attachment of the 5S RNA into the large ribosomal subunit, where it forms part of the central protuberance. The protein is Large ribosomal subunit protein uL18 of Mycoplasma mobile (strain ATCC 43663 / 163K / NCTC 11711) (Mesomycoplasma mobile).